Consider the following 429-residue polypeptide: MPIAMVMAEASARHGVEILCIGTELLLGNILNSNARWLAEELAALGLPHYRQTVVGDNVERLKESVLEAVDRSRILITTGGLGPTPDDLTTETLAAAFDTPLEERPELWFEIQAKLTAGGSISAISNRKQALFPRGAEILPNPSGTAPGMIWCPRPGFTVLTFPGVPSEMKQMWSQTAVPWLRQHGGLADIFVSRLLRFTGIAESTLAEEVADLLEQGNPTVAPYAGLGEVKLRITARGATVEQARQLLDPVDAALRHRTGLFCYGSDDESLASVVLDLLRQRGETVVVAESCTGGGVGAALAAVPRASEVFLGGVIAYSNAIKQALLGISTDLLHQHGAVSDPVVRAMAEGARQRLGADWSIAVSGVAGPGGGTHAKPVGLVHIAVAGPHGCDASPVQFGVRRGRLAIQELSVVRSLDQLRRLLLDGS.

The protein belongs to the CinA family.

This Prochlorococcus marinus (strain MIT 9313) protein is CinA-like protein.